Consider the following 597-residue polypeptide: MKFRNILKNEKNEKNEASASTSHASEDIEIIPSRYDNEKFYSATEATHKKKTGSTGFDDTISLTHTLSRSRIPTSMEDEDAEEAEVHDTRVKRALKQRHIGMIALGGTIGTGLFVGISTPLSNSGPVGALIAYIFMGTIIYFVTQSLGEMATFIPVTSSITVFSKRFLSPAFGVANGYMYWFNWAITYAVEVSVIGQVIQYWTFKVPLAAWIGIFWVLITLMNFFPVKIYGEFEFWVASIKVIAIVGYLIYALIIVCGGSHQGPIGFRYWRNPGAMGAGIISSDLGEARFLGWVSSLINAAFTYQGTELVGITAGEAANPRKSVPRAINKVVFRIVLFYIMSLFFVGLLVPYNDPRLSASSAVIASSPFVISIQNAGTKVLPDIFNAVVLVTVISAANSNVYVGSRVLYALAQSGNAPKQFAYVTRHGVPYLGVICTALLGLLAFLVVNHNANTAFNWLINISTLAGLCAWLFISLAHIRFMQALKFRGISRDDLPFKAKFMPWGAYYASFFVTVIIFIQGFQAFAPKFDVSEFFTAYISLILLVVLFAGCQLYYRCRFLWKLEDIDIDSDRREIDAIVWEDDEPQNLWEKFWAAVA.

A disordered region spans residues 1–29 (MKFRNILKNEKNEKNEASASTSHASEDIE). Residues 7–16 (LKNEKNEKNE) are compositionally biased toward basic and acidic residues. 11 helical membrane passes run 100–120 (IGMI…ISTP), 124–144 (SGPV…YFVT), 179–199 (MYWF…GQVI), 206–226 (VPLA…NFFP), 235–255 (FWVA…ALII), 331–351 (VVFR…LLVP), 384–404 (IFNA…VYVG), 428–448 (GVPY…FLVV), 459–479 (LINI…LAHI), 501–521 (FMPW…FIQG), and 534–554 (FFTA…CQLY).

The protein belongs to the amino acid-polyamine-organocation (APC) superfamily. YAT (TC 2.A.3.10) family.

Its subcellular location is the cell membrane. Its function is as follows. High-affinity permease for arginine. May also transport other basic amino acids. The sequence is that of Arginine permease CAN1 from Candida glabrata (strain ATCC 2001 / BCRC 20586 / JCM 3761 / NBRC 0622 / NRRL Y-65 / CBS 138) (Yeast).